The following is a 283-amino-acid chain: Phospholipase C (283 aa).

Residues 1–24 form the signal peptide; that stretch reads MKKKVLALGAAITLVAPLQSVAFA. Residues 25–38 constitute a propeptide that is removed on maturation; the sequence is HENDGGQRFGVIPR. Zn(2+) contacts are provided by Trp39, His52, Asp93, His107, His156, Asp160, His166, His180, and Glu184. In terms of domain architecture, Zn-dependent PLC spans 39 to 283; it reads WSAEDKHKEG…QLWFDTYGNR (245 aa).

The protein belongs to the bacterial zinc-metallophospholipase C family. As to quaternary structure, monomer. It depends on Zn(2+) as a cofactor.

The enzyme catalyses a 1,2-diacyl-sn-glycero-3-phosphocholine + H2O = phosphocholine + a 1,2-diacyl-sn-glycerol + H(+). Required, with sphingomyelinase, to effect target cell lysis (hemolysis). The protein is Phospholipase C (cerA) of Bacillus cereus.